A 356-amino-acid polypeptide reads, in one-letter code: Chorismate synthase (356 aa).

Residue Arg46 participates in NADP(+) binding. FMN is bound by residues 122–124 (RSS), 234–235 (NG), Gly274, 289–293 (KPTPS), and Arg315.

Belongs to the chorismate synthase family. As to quaternary structure, homotetramer. Requires FMNH2 as cofactor.

The catalysed reaction is 5-O-(1-carboxyvinyl)-3-phosphoshikimate = chorismate + phosphate. The protein operates within metabolic intermediate biosynthesis; chorismate biosynthesis; chorismate from D-erythrose 4-phosphate and phosphoenolpyruvate: step 7/7. Its function is as follows. Catalyzes the anti-1,4-elimination of the C-3 phosphate and the C-6 proR hydrogen from 5-enolpyruvylshikimate-3-phosphate (EPSP) to yield chorismate, which is the branch point compound that serves as the starting substrate for the three terminal pathways of aromatic amino acid biosynthesis. This reaction introduces a second double bond into the aromatic ring system. This Campylobacter fetus subsp. fetus (strain 82-40) protein is Chorismate synthase.